The primary structure comprises 139 residues: Trafficking protein particle complex subunit 2-like protein (139 aa).

It belongs to the TRAPP small subunits family. Sedlin subfamily.

Its subcellular location is the cytoplasm. The protein resides in the perinuclear region. It localises to the endoplasmic reticulum. The protein localises to the golgi apparatus. May play a role in vesicular transport from endoplasmic reticulum to Golgi. The chain is Trafficking protein particle complex subunit 2-like protein (TRAPPC2L) from Taeniopygia guttata (Zebra finch).